The chain runs to 279 residues: B3 domain-containing protein Os05g0481400 (279 aa).

The tract at residues 45 to 68 (ARLQKSTRASPKPRKKFEVGATEV) is disordered. A DNA-binding region (TF-B3) is located at residues 139 to 230 (FVKTMVRSHV…RFKIYIIKAV (92 aa)). Composition is skewed to acidic residues over residues 233 to 244 (DANESEPADEEA) and 252 to 262 (TEDAAEQDDSP). The tract at residues 233-279 (DANESEPADEEAIGDKDTSTEDAAEQDDSPNAEPLKGTKRRKLRGRR) is disordered. The span at 269–279 (GTKRRKLRGRR) shows a compositional bias: basic residues.

The protein resides in the nucleus. This is B3 domain-containing protein Os05g0481400 from Oryza sativa subsp. japonica (Rice).